A 342-amino-acid chain; its full sequence is Aquaporin-7 (342 aa).

At 1-36 (MVQASGHRRSTRGSKMVSWSVIAKIQEILQRKMVRE) the chain is on the cytoplasmic side. Serine 20 bears the Phosphoserine mark. A helical transmembrane segment spans residues 37–54 (FLAEFMSTYVMMVFGLGS). Residues 55–67 (VAHMVLNKKYGSY) lie on the Extracellular side of the membrane. The helical transmembrane segment at 68-85 (LGVNLGFGFGVTMGVHVA) threads the bilayer. The Cytoplasmic segment spans residues 86–89 (GRIS). Residues 90 to 103 (GAHMNAAVTFANCA) constitute an intramembrane region (discontinuously helical). The NPA 1 motif lies at 94–96 (NAA). Residues 104–111 (LGRVPWRK) lie on the Cytoplasmic side of the membrane. Residues 112 to 132 (FPVYVLGQFLGSFLAAATIYS) traverse the membrane as a helical segment. At 133–170 (LFYTAILHFSGGQLMVTGPVATAGIFATYLPDHMTLWR) the chain is on the extracellular side. Residues 171-188 (GFLNEAWLTGMLQLCLFA) traverse the membrane as a helical segment. Over 189 to 200 (ITDQENNPALPG) the chain is Cytoplasmic. The chain crosses the membrane as a helical span at residues 201-217 (TEALVIGILVVIIGVSL). Topologically, residues 218-221 (GMNT) are extracellular. Positions 222 to 235 (GYAINPSRDLPPRI) form an intramembrane region, discontinuously helical. Residues 226-228 (NPS) carry the NPA 2 motif. Residues 236–253 (FTFIAGWGKQVFSNGENW) lie on the Extracellular side of the membrane. The helical transmembrane segment at 254–275 (WWVPVVAPLLGAYLGGIIYLVF) threads the bilayer. The Cytoplasmic portion of the chain corresponds to 276 to 342 (IGSTIPREPL…LHESMALEHF (67 aa)).

This sequence belongs to the MIP/aquaporin (TC 1.A.8) family. As to quaternary structure, homotetramer; each monomer provides an independent glycerol/water pore. Two homotetramers on opposing membranes can dimerize, forming a cell-cell junction. Interacts with PLIN1. In terms of processing, phosphorylation by PKA could prevent the interaction with PLIN1. As to expression, detected in the sperm head (at protein level). Detected in white adipose tissue.

The protein resides in the cell membrane. It is found in the cytoplasmic vesicle membrane. It localises to the lipid droplet. It carries out the reaction glycerol(in) = glycerol(out). The catalysed reaction is H2O(in) = H2O(out). The enzyme catalyses urea(in) = urea(out). With respect to regulation, glycerol transport is regulated by pH, with the porin being permeable to glycerol at pH 7.4 but not at pH 5.5. Water permeability, however, is not influenced by pH. Inhibited by mercury ions. Aquaglyceroporins form homotetrameric transmembrane channels, with each monomer independently mediating glycerol and water transport across the plasma membrane along their osmotic gradient. Could also be permeable to urea. Mediates the efflux of glycerol, formed upon triglyceride hydrolysis, to avoid its accumulation in adipocytes and to make it available to other tissues. In the kidney, mediates the reabsorption of glycerol, preventing its loss in urine, again participating to energy homeostasis. In pancreatic beta cells, it also mediates the efflux of glycerol, regulating its intracellular levels. The sequence is that of Aquaporin-7 from Homo sapiens (Human).